A 215-amino-acid chain; its full sequence is Leucyl/phenylalanyl-tRNA--protein transferase (215 aa).

Belongs to the L/F-transferase family.

It localises to the cytoplasm. The enzyme catalyses N-terminal L-lysyl-[protein] + L-leucyl-tRNA(Leu) = N-terminal L-leucyl-L-lysyl-[protein] + tRNA(Leu) + H(+). The catalysed reaction is N-terminal L-arginyl-[protein] + L-leucyl-tRNA(Leu) = N-terminal L-leucyl-L-arginyl-[protein] + tRNA(Leu) + H(+). It carries out the reaction L-phenylalanyl-tRNA(Phe) + an N-terminal L-alpha-aminoacyl-[protein] = an N-terminal L-phenylalanyl-L-alpha-aminoacyl-[protein] + tRNA(Phe). Its function is as follows. Functions in the N-end rule pathway of protein degradation where it conjugates Leu, Phe and, less efficiently, Met from aminoacyl-tRNAs to the N-termini of proteins containing an N-terminal arginine or lysine. This Campylobacter jejuni subsp. doylei (strain ATCC BAA-1458 / RM4099 / 269.97) protein is Leucyl/phenylalanyl-tRNA--protein transferase.